An 872-amino-acid polypeptide reads, in one-letter code: DNA mismatch repair protein MutS (872 aa).

Position 602-609 (602-609 (GPNMSGKS)) interacts with ATP.

Belongs to the DNA mismatch repair MutS family.

Its function is as follows. This protein is involved in the repair of mismatches in DNA. It is possible that it carries out the mismatch recognition step. This protein has a weak ATPase activity. This is DNA mismatch repair protein MutS from Staphylococcus aureus (strain Mu3 / ATCC 700698).